We begin with the raw amino-acid sequence, 340 residues long: Replication factor C subunit 3 (340 aa).

The residue at position 2 (Ser2) is an N-acetylserine. Residues 16–19 (VEKY), Arg20, Tyr28, 53–61 (GPPGTGKTS), Asn148, and Arg206 contribute to the ATP site.

It belongs to the activator 1 small subunits family. In terms of assembly, replication factor C (RFC) is a heteropentamer of subunits RFC1, RFC2, RFC3, RFC4 and RFC5 and forms a complex with POL30/PCNA in the presence of ATP. Component of the RAD24-RFC complex which consists of RAD14, RFC2, RFC3, RFC4 and RFC5 and associates with the checkpoint clamp DDC1:MEC3:RAD17 complex. Component of the ELG1-RFC complex which consists of ELG1, RFC2, RFC3, RFC4 and RFC5. Component of the CTF18-RFC complex, which consists of CTF18, CTF8, DCC1, RFC2, RFC3, RFC4 and RFC5. RFC3 interacts with ECO1 and POL30/PCNA.

It localises to the nucleus. Component of ATP-dependent clamp loader (RFC and RFC-like) complexes for DNA clamps, such as the POL30/PCNA homotrimer and the checkpoint clamp DDC1:MEC3:RAD17 complex. During a clamp loading circle, the RFC:clamp complex binds to DNA and the recognition of the double-stranded/single-stranded junction stimulates ATP hydrolysis by RFC. The complex presumably provides bipartite ATP sites in which one subunit supplies a catalytic site for hydrolysis of ATP bound to the neighboring subunit. Dissociation of RFC from the clamp leaves the clamp encircling DNA. Component of the replication factor C (RFC or activator 1) complex which loads POL30/PCNA and acts during elongation of primed DNA templates by DNA polymerase delta and epsilon. RFC has an essential but redundant activity in sister chromatid cohesion establishment. Component of the RFC-like complex CTF18-RFC which is required for efficient establishment of chromosome cohesion during S-phase and may load or unload POL30/PCNA. Component of the RFC-like RAD24-RFC complex which loads the checkpoint clamp DDC1:MEC3:RAD17 complex and is involved in DNA repair pathways. Component of the RFC-like ELG1-RFC complex which appears to have a role in DNA replication, replication fork re-start, recombination and repair. RFC3 supplies a catalytic site to the ATP site of RFC4. The protein is Replication factor C subunit 3 (RFC3) of Saccharomyces cerevisiae (strain ATCC 204508 / S288c) (Baker's yeast).